We begin with the raw amino-acid sequence, 444 residues long: 3-isopropylmalate dehydratase large subunit (444 aa).

Positions 348, 408, and 411 each coordinate [4Fe-4S] cluster. A disordered region spans residues 423–444 (ERXXSHSNRNFEGRQGRGGRTH).

This sequence belongs to the aconitase/IPM isomerase family. LeuC type 1 subfamily. As to quaternary structure, heterodimer of LeuC and LeuD. It depends on [4Fe-4S] cluster as a cofactor.

It carries out the reaction (2R,3S)-3-isopropylmalate = (2S)-2-isopropylmalate. The protein operates within amino-acid biosynthesis; L-leucine biosynthesis; L-leucine from 3-methyl-2-oxobutanoate: step 2/4. In terms of biological role, catalyzes the isomerization between 2-isopropylmalate and 3-isopropylmalate, via the formation of 2-isopropylmaleate. In Buchnera aphidicola subsp. Uroleucon rudbeckiae, this protein is 3-isopropylmalate dehydratase large subunit.